A 340-amino-acid chain; its full sequence is MKKAVVLLNLGGPDSLSAVRPFLFNLFYDKRIINLPNPFRFFLAKFISAKRENNARKIYEQIGGKSPILENTKMQAEALERELNRSVFCHPSSVTLGPRKENWIPVSRIGMTSKLTKVFICMRYWHPFANEVVKSVKQFDPDEVILLPLYPQYSTTTTLSSIENWQKNAKQYGIKCNTKIIRHHYDNQDFIEAHANLITKHYKLASEVGKPRVLFSAHSLPLSVIKKGDPYALQVEETVKLIVKKLHIKDLDWSICYQSKIGPVKWLEPSTESELLRAKADGVPVVLLPISFVSEHSETLVELDMEYKTIIKDGYYFRIPTLSTNSLFIKCLAGLCINHS.

The Fe cation site is built by histidine 218 and glutamate 298.

Belongs to the ferrochelatase family.

The protein resides in the cytoplasm. It catalyses the reaction heme b + 2 H(+) = protoporphyrin IX + Fe(2+). Its pathway is porphyrin-containing compound metabolism; protoheme biosynthesis; protoheme from protoporphyrin-IX: step 1/1. Functionally, catalyzes the ferrous insertion into protoporphyrin IX. The chain is Ferrochelatase from Wolbachia sp. subsp. Brugia malayi (strain TRS).